The primary structure comprises 159 residues: Transcription elongation factor GreA (159 aa).

A coiled-coil region spans residues Ser44–Ile75.

Belongs to the GreA/GreB family.

Functionally, necessary for efficient RNA polymerase transcription elongation past template-encoded arresting sites. The arresting sites in DNA have the property of trapping a certain fraction of elongating RNA polymerases that pass through, resulting in locked ternary complexes. Cleavage of the nascent transcript by cleavage factors such as GreA or GreB allows the resumption of elongation from the new 3'terminus. GreA releases sequences of 2 to 3 nucleotides. The sequence is that of Transcription elongation factor GreA from Chlorobium limicola (strain DSM 245 / NBRC 103803 / 6330).